The sequence spans 249 residues: Triosephosphate isomerase (249 aa).

A substrate-binding site is contributed by Asn8–Lys10. The active-site Electrophile is His95. Glu163 acts as the Proton acceptor in catalysis. Residues Gly169 and Ser209 each coordinate substrate.

The protein belongs to the triosephosphate isomerase family. In terms of assembly, homodimer.

It localises to the cytoplasm. It catalyses the reaction D-glyceraldehyde 3-phosphate = dihydroxyacetone phosphate. It participates in carbohydrate biosynthesis; gluconeogenesis. Its pathway is carbohydrate degradation; glycolysis; D-glyceraldehyde 3-phosphate from glycerone phosphate: step 1/1. Its function is as follows. Involved in the gluconeogenesis. Catalyzes stereospecifically the conversion of dihydroxyacetone phosphate (DHAP) to D-glyceraldehyde-3-phosphate (G3P). This Orientia tsutsugamushi (strain Ikeda) (Rickettsia tsutsugamushi) protein is Triosephosphate isomerase.